The sequence spans 639 residues: Transcription factor phomR (639 aa).

A DNA-binding region (zn(2)-C6 fungal-type) is located at residues 14–41 (CWTCRLRRKKCNEGGPPCDNCEARGIHC). Disordered stretches follow at residues 58 to 136 (REEA…AGTG) and 476 to 499 (LPRS…TGPE). Residues 68–108 (SGRGRSYSRSSSTAAAAAPKPAEGAMVTGGSSSSSRGSGSS) are compositionally biased toward low complexity.

Its subcellular location is the nucleus. Its function is as follows. Transcription factor; part of the gene cluster that mediates the biosynthesis of the phomopsins, a group of hexapeptide mycotoxins which infects lupins and causes lupinosis disease in livestock. May play a role in the regulation of the production of phomopsins. In Diaporthe leptostromiformis (Lupinosis disease fungus), this protein is Transcription factor phomR.